The chain runs to 133 residues: ATP synthase epsilon chain (133 aa).

The protein belongs to the ATPase epsilon chain family. F-type ATPases have 2 components, CF(1) - the catalytic core - and CF(0) - the membrane proton channel. CF(1) has five subunits: alpha(3), beta(3), gamma(1), delta(1), epsilon(1). CF(0) has three main subunits: a, b and c.

Its subcellular location is the cell membrane. Functionally, produces ATP from ADP in the presence of a proton gradient across the membrane. This is ATP synthase epsilon chain from Clostridium botulinum (strain Langeland / NCTC 10281 / Type F).